Consider the following 775-residue polypeptide: Phenylalanine--tRNA ligase beta subunit (775 aa).

The 109-residue stretch at 39-147 (GIDLDGVVFG…EDFKPGTDAN (109 aa)) folds into the tRNA-binding domain. The B5 domain occupies 394 to 470 (YKPKKVFLPQ…RVKGYEHYTS (77 aa)). 4 residues coordinate Mg(2+): aspartate 448, aspartate 454, glutamate 457, and glutamate 458. The region spanning 681-774 (AKFPPVVRDI…LKEKYGVELR (94 aa)) is the FDX-ACB domain.

It belongs to the phenylalanyl-tRNA synthetase beta subunit family. Type 1 subfamily. Tetramer of two alpha and two beta subunits. Mg(2+) is required as a cofactor.

The protein localises to the cytoplasm. The enzyme catalyses tRNA(Phe) + L-phenylalanine + ATP = L-phenylalanyl-tRNA(Phe) + AMP + diphosphate + H(+). The polypeptide is Phenylalanine--tRNA ligase beta subunit (pheT) (Aquifex aeolicus (strain VF5)).